The following is a 209-amino-acid chain: Chaperone protein TorD (209 aa).

Belongs to the TorD/DmsD family. TorD subfamily.

It is found in the cytoplasm. Involved in the biogenesis of TorA. Acts on TorA before the insertion of the molybdenum cofactor and, as a result, probably favors a conformation of the apoenzyme that is competent for acquiring the cofactor. The protein is Chaperone protein TorD of Shewanella baltica (strain OS155 / ATCC BAA-1091).